An 891-amino-acid polypeptide reads, in one-letter code: MEYRTNNVPVGNETKSAALNALPKIKISDSPNRHHNLVDAFMQSPSYSTQPKSAVEPLGLSFSPGYISPSSQSPHHGPVRSPSSRKPLPASPSRTRDHSLRVPVSGHSYSADEKPRERRKVIGNYVLGKTIGAGSMGKVKVAHHLKTGEQFAIKIVTRLHPDITKAKAAASAEATKAAQSEKNKEIRTVREAALSTLLRHPYICEARDVYITNSHYYMVFEFVDGGQMLDYIISHGKLKEKQARKFVRQIGSALSYLHQNSVVHRDLKIENILISKTGDIKIIDFGLSNLYRRQSRLRTFCGSLYFAAPELLNAQPYIGPEVDVWSFGIVLYVLVCGKVPFDDQNMSALHAKIKKGTVEYPSYLSSDCKGLLSRMLVTDPLKRATLEEVLNHPWMIRNYEGPPASFAPERSPITLPLDPEIIREMNGFDFGPPEKIVRELTKVISSEAYQSLAKTGFYSGPNSADKKKSFFEFRIRHAAHDIENPILPSLSMNTDIYDAFHPLISIYYLVSERRVYEKGGNWNRIAKTPVSSVPSSPVQPTSYNRTLPPMPEVVAYKGDEESPRVSRNTSLARRKPLPDTESHSPSPSATSSIKKNPSSIFRRFSSRRKQNKSSTSTLQISAPLETSQSPPTPRTKPSHKPPVSYKNKLVTQSAIGRSTSVREGRYAGISSQMDSLNMDSTGPSASNMANAPPSVRNNRVLNPRGASLGHGRMSTSTTNRQKQILNETMGNPVDKNSTSPSKSTDKLDPIKPVFLKGLFSVSTTSTKSTESIQRDLIRVMGMLDIEYKEIKGGYACLYKPQGIRTPTKSTSVHTRRKPSYGSNSTTDSYGSVPDTVPLDDNGESPASNLAFEIYIVKVPILSLRGVSFHRISGNSWQYKTLASRILNELKL.

Residues 65-116 (GYISPSSQSPHHGPVRSPSSRKPLPASPSRTRDHSLRVPVSGHSYSADEKPR) form a disordered region. In terms of domain architecture, Protein kinase spans 125 to 395 (YVLGKTIGAG…LEEVLNHPWM (271 aa)). ATP is bound by residues 131–139 (IGAGSMGKV) and lysine 154. Aspartate 266 (proton acceptor) is an active-site residue. Threonine 528 is subject to Phosphothreonine. 3 disordered regions span residues 528 to 699 (TPVS…RNNR), 728 to 747 (TMGNPVDKNSTSPSKSTDKL), and 805 to 841 (TPTKSTSVHTRRKPSYGSNSTTDSYGSVPDTVPLDDN). 2 stretches are compositionally biased toward low complexity: residues 529-538 (PVSSVPSSPV) and 583-603 (HSPSPSATSSIKKNPSSIFRR). Residues serine 535 and serine 536 each carry the phosphoserine modification. 5 stretches are compositionally biased toward polar residues: residues 612–629 (KSSTSTLQISAPLETSQS), 649–659 (LVTQSAIGRST), 669–699 (ISSQMDSLNMDSTGPSASNMANAPPSVRNNR), 728–742 (TMGNPVDKNSTSPSK), and 820–829 (YGSNSTTDSY). Residues 842-891 (GESPASNLAFEIYIVKVPILSLRGVSFHRISGNSWQYKTLASRILNELKL) enclose the KA1 domain.

Belongs to the protein kinase superfamily. Ser/Thr protein kinase family.

The protein resides in the cytoplasm. The enzyme catalyses L-seryl-[protein] + ATP = O-phospho-L-seryl-[protein] + ADP + H(+). The catalysed reaction is L-threonyl-[protein] + ATP = O-phospho-L-threonyl-[protein] + ADP + H(+). Has a role in establishing the characteristic rod cell shape. Important for cell polarity and is involved in directing growth to the cell ends. This chain is Protein kinase kin1 (kin1), found in Schizosaccharomyces pombe (strain 972 / ATCC 24843) (Fission yeast).